We begin with the raw amino-acid sequence, 256 residues long: Pimeloyl-[acyl-carrier protein] methyl ester esterase (256 aa).

An AB hydrolase-1 domain is found at His-15 to Pro-242. Substrate contacts are provided by residues Trp-22, Ser-82–Leu-83, and Phe-143–Gln-147. Residue Ser-82 is the Nucleophile of the active site. Catalysis depends on residues Asp-207 and His-235. His-235 is a binding site for substrate.

This sequence belongs to the AB hydrolase superfamily. Carboxylesterase BioH family. As to quaternary structure, monomer.

The protein resides in the cytoplasm. The catalysed reaction is 6-carboxyhexanoyl-[ACP] methyl ester + H2O = 6-carboxyhexanoyl-[ACP] + methanol + H(+). It functions in the pathway cofactor biosynthesis; biotin biosynthesis. Its function is as follows. The physiological role of BioH is to remove the methyl group introduced by BioC when the pimeloyl moiety is complete. It allows to synthesize pimeloyl-ACP via the fatty acid synthetic pathway through the hydrolysis of the ester bonds of pimeloyl-ACP esters. This is Pimeloyl-[acyl-carrier protein] methyl ester esterase from Escherichia coli (strain K12 / MC4100 / BW2952).